The chain runs to 218 residues: Grancalcin (218 aa).

4 consecutive EF-hand domains span residues 49–84, 85–119, 120–155, and 156–191; these read SSAG…SGIS, GTYS…KELW, SALN…MGYR, and LSPQ…ALTD. Residues D103, D105, T107, K109, D133, D135, S137, T139, and E144 each contribute to the Ca(2+) site.

Homodimer. Interacts with SRI and LCP1.

Its subcellular location is the cytoplasm. The protein resides in the cytoplasmic granule membrane. Functionally, calcium-binding protein that may play a role in the adhesion of neutrophils to fibronectin. May play a role in the formation of focal adhesions. The sequence is that of Grancalcin (GCA) from Pongo abelii (Sumatran orangutan).